We begin with the raw amino-acid sequence, 104 residues long: Glutaredoxin 1 (104 aa).

A Glutaredoxin domain is found at 1 to 96; the sequence is MNKSILHTII…KLLETQPKNK (96 aa). Residues cysteine 17 and cysteine 20 are joined by a disulfide bond.

The protein belongs to the glutaredoxin family. In terms of assembly, monomer.

The protein resides in the cytoplasm. Has a glutathione-disulfide oxidoreductase activity in the presence of NADPH and glutathione reductase. Reduces low molecular weight disulfides and proteins. The polypeptide is Glutaredoxin 1 (grxC1) (Rickettsia typhi (strain ATCC VR-144 / Wilmington)).